The following is a 541-amino-acid chain: MGLLFKQPEGTAGKAWPAILISGFVAFGGILFGYDTGTISGILAMPYWARTFSTGYRDSTGQLNVTSSQSSAIVSILSAGTFFGALGASPMGDIIGRRWGLIASNGIFVLGVVLQTIATSIPPFLAGRFFAGLGVGLISALVPLYQSETAPKWIRGFIVGAYQFAITVGLLLASVLNNATHHRNDSGSYRIPIAVQFAWSIILVGGMLILPETPRYLVKKDNIQAAARSLSKLRRLPEDHAAIREELAEIQANHSFEMSLGRSGYMECFQGNLLKRLVTGCLLQALQQLSGINFIMYYGTQFFKNSGFQNEFVITLITNCVNVGSTLPGLYAIDKWGRRPVLLTGAIGMAVSQLLVAVLGTTTTGQDSRGNIIVHDAAAQKAAIAFICLYIFFFAASWGPSAWVITGEIFPLKTRAKSLSMTTATNWLLNWALSFSTPYLVNYGDGNANLQSKIFFIWFGCCFLCIGFVHFMIYETKGLTLEEVDELYMEVDSARDSVKWQPRGVARGEKEAHGAETDFAVETAKGASEQQEVIGDAGRSL.

A helical membrane pass occupies residues 15 to 35 (AWPAILISGFVAFGGILFGYD). The N-linked (GlcNAc...) asparagine glycan is linked to asparagine 64. Transmembrane regions (helical) follow at residues 72–92 (AIVSILSAGTFFGALGASPMG), 106–126 (GIFVLGVVLQTIATSIPPFLA), 129–149 (FFAGLGVGLISALVPLYQSET), and 156–176 (GFIVGAYQFAITVGLLLASVL). Asparagine 178 and asparagine 184 each carry an N-linked (GlcNAc...) asparagine glycan. The chain crosses the membrane as a helical span at residues 191-211 (IPIAVQFAWSIILVGGMLILP). A glycan (N-linked (GlcNAc...) asparagine) is linked at asparagine 253. Transmembrane regions (helical) follow at residues 277–297 (LVTGCLLQALQQLSGINFIMY), 313–333 (VITLITNCVNVGSTLPGLYAI), 340–360 (PVLLTGAIGMAVSQLLVAVLG), 384–404 (IAFICLYIFFFAASWGPSAWV), 418–440 (SLSMTTATNWLLNWALSFSTPYL), and 454–474 (IFFIWFGCCFLCIGFVHFMIY).

Belongs to the major facilitator superfamily. Sugar transporter (TC 2.A.1.1) family.

The protein localises to the membrane. This chain is Major facilitator-type transporter ecdD, found in Aspergillus rugulosus (Emericella rugulosa).